Consider the following 193-residue polypeptide: Xanthine phosphoribosyltransferase (193 aa).

The xanthine site is built by Leu-20 and Thr-27. 128–132 contacts 5-phospho-alpha-D-ribose 1-diphosphate; it reads ANGQA. Lys-156 serves as a coordination point for xanthine.

The protein belongs to the purine/pyrimidine phosphoribosyltransferase family. Xpt subfamily. Homodimer.

It is found in the cytoplasm. It carries out the reaction XMP + diphosphate = xanthine + 5-phospho-alpha-D-ribose 1-diphosphate. The protein operates within purine metabolism; XMP biosynthesis via salvage pathway; XMP from xanthine: step 1/1. Converts the preformed base xanthine, a product of nucleic acid breakdown, to xanthosine 5'-monophosphate (XMP), so it can be reused for RNA or DNA synthesis. The chain is Xanthine phosphoribosyltransferase from Streptococcus agalactiae serotype Ia (strain ATCC 27591 / A909 / CDC SS700).